Consider the following 447-residue polypeptide: ATP-dependent protease ATPase subunit HslU (447 aa).

ATP-binding positions include isoleucine 18, 60-65, aspartate 259, glutamate 325, and arginine 397; that span reads GVGKTE.

This sequence belongs to the ClpX chaperone family. HslU subfamily. In terms of assembly, a double ring-shaped homohexamer of HslV is capped on each side by a ring-shaped HslU homohexamer. The assembly of the HslU/HslV complex is dependent on binding of ATP.

The protein resides in the cytoplasm. ATPase subunit of a proteasome-like degradation complex; this subunit has chaperone activity. The binding of ATP and its subsequent hydrolysis by HslU are essential for unfolding of protein substrates subsequently hydrolyzed by HslV. HslU recognizes the N-terminal part of its protein substrates and unfolds these before they are guided to HslV for hydrolysis. The polypeptide is ATP-dependent protease ATPase subunit HslU (Burkholderia ambifaria (strain MC40-6)).